The chain runs to 457 residues: Bifunctional protein GlmU (457 aa).

Residues 1 to 230 (MSKRYAVVLA…FEESLGVNDR (230 aa)) are pyrophosphorylase. Residues 9 to 12 (LAAG), K23, Q73, and 78 to 79 (GT) contribute to the UDP-N-acetyl-alpha-D-glucosamine site. Position 103 (D103) interacts with Mg(2+). G140, E155, N170, and N228 together coordinate UDP-N-acetyl-alpha-D-glucosamine. N228 lines the Mg(2+) pocket. The linker stretch occupies residues 231 to 251 (IALAEASRLMQRRINENHMRN). Positions 252–457 (GVTLVNPENT…GYAKHLNHGK (206 aa)) are N-acetyltransferase. 2 residues coordinate UDP-N-acetyl-alpha-D-glucosamine: R333 and K351. H363 functions as the Proton acceptor in the catalytic mechanism. UDP-N-acetyl-alpha-D-glucosamine is bound by residues Y366 and N377. Acetyl-CoA-binding positions include 386–387 (NY), A423, and R440.

The protein in the N-terminal section; belongs to the N-acetylglucosamine-1-phosphate uridyltransferase family. In the C-terminal section; belongs to the transferase hexapeptide repeat family. Homotrimer. Mg(2+) serves as cofactor.

Its subcellular location is the cytoplasm. The catalysed reaction is alpha-D-glucosamine 1-phosphate + acetyl-CoA = N-acetyl-alpha-D-glucosamine 1-phosphate + CoA + H(+). The enzyme catalyses N-acetyl-alpha-D-glucosamine 1-phosphate + UTP + H(+) = UDP-N-acetyl-alpha-D-glucosamine + diphosphate. Its pathway is nucleotide-sugar biosynthesis; UDP-N-acetyl-alpha-D-glucosamine biosynthesis; N-acetyl-alpha-D-glucosamine 1-phosphate from alpha-D-glucosamine 6-phosphate (route II): step 2/2. It participates in nucleotide-sugar biosynthesis; UDP-N-acetyl-alpha-D-glucosamine biosynthesis; UDP-N-acetyl-alpha-D-glucosamine from N-acetyl-alpha-D-glucosamine 1-phosphate: step 1/1. The protein operates within bacterial outer membrane biogenesis; LPS lipid A biosynthesis. Functionally, catalyzes the last two sequential reactions in the de novo biosynthetic pathway for UDP-N-acetylglucosamine (UDP-GlcNAc). The C-terminal domain catalyzes the transfer of acetyl group from acetyl coenzyme A to glucosamine-1-phosphate (GlcN-1-P) to produce N-acetylglucosamine-1-phosphate (GlcNAc-1-P), which is converted into UDP-GlcNAc by the transfer of uridine 5-monophosphate (from uridine 5-triphosphate), a reaction catalyzed by the N-terminal domain. This is Bifunctional protein GlmU from Listeria monocytogenes serotype 4b (strain F2365).